We begin with the raw amino-acid sequence, 287 residues long: Large ribosomal subunit protein uL2 (287 aa).

Residues 221 to 287 (RGSVMNPCDH…SKRSRGGRDS (67 aa)) form a disordered region. Residues 258 to 287 (KTRKKNKPSNKLVVRRRRRVSKRSRGGRDS) are compositionally biased toward basic residues.

Belongs to the universal ribosomal protein uL2 family. In terms of assembly, part of the 50S ribosomal subunit. Forms a bridge to the 30S subunit in the 70S ribosome.

Its function is as follows. One of the primary rRNA binding proteins. Required for association of the 30S and 50S subunits to form the 70S ribosome, for tRNA binding and peptide bond formation. It has been suggested to have peptidyltransferase activity; this is somewhat controversial. Makes several contacts with the 16S rRNA in the 70S ribosome. This is Large ribosomal subunit protein uL2 from Prochlorococcus marinus (strain AS9601).